The following is a 170-amino-acid chain: Large ribosomal subunit protein uL15 (170 aa).

Over residues 1–12 the composition is skewed to basic and acidic residues; it reads MKLHDLRPAEGA. Residues 1–52 are disordered; the sequence is MKLHDLRPAEGAHRKRKRIGRGHGSGKGKTGGKGMMGQKARSGPGPYRTFEG. The span at 13–26 shows a compositional bias: basic residues; that stretch reads HRKRKRIGRGHGSG.

Belongs to the universal ribosomal protein uL15 family. Part of the 50S ribosomal subunit.

Binds to the 23S rRNA. The polypeptide is Large ribosomal subunit protein uL15 (Chloroflexus aurantiacus (strain ATCC 29366 / DSM 635 / J-10-fl)).